The primary structure comprises 81 residues: Cytochrome b559 subunit alpha (81 aa).

Residues 21 to 35 traverse the membrane as a helical segment; the sequence is VIHALTIPALFLAGW. H23 is a heme binding site.

The protein belongs to the PsbE/PsbF family. As to quaternary structure, heterodimer of an alpha subunit and a beta subunit. PSII is composed of 1 copy each of membrane proteins PsbA, PsbB, PsbC, PsbD, PsbE, PsbF, PsbH, PsbI, PsbJ, PsbK, PsbL, PsbM, PsbT, PsbX, PsbY, PsbZ, Psb30/Ycf12, peripheral proteins PsbO, CyanoQ (PsbQ), PsbU, PsbV and a large number of cofactors. It forms dimeric complexes. Heme b serves as cofactor.

It localises to the cellular thylakoid membrane. Its function is as follows. This b-type cytochrome is tightly associated with the reaction center of photosystem II (PSII). PSII is a light-driven water:plastoquinone oxidoreductase that uses light energy to abstract electrons from H(2)O, generating O(2) and a proton gradient subsequently used for ATP formation. It consists of a core antenna complex that captures photons, and an electron transfer chain that converts photonic excitation into a charge separation. In Synechococcus sp. (strain JA-3-3Ab) (Cyanobacteria bacterium Yellowstone A-Prime), this protein is Cytochrome b559 subunit alpha.